A 156-amino-acid chain; its full sequence is Small ribosomal subunit protein uS7 (156 aa).

This sequence belongs to the universal ribosomal protein uS7 family. Part of the 30S ribosomal subunit. Contacts proteins S9 and S11.

Functionally, one of the primary rRNA binding proteins, it binds directly to 16S rRNA where it nucleates assembly of the head domain of the 30S subunit. Is located at the subunit interface close to the decoding center, probably blocks exit of the E-site tRNA. The sequence is that of Small ribosomal subunit protein uS7 from Rhizorhabdus wittichii (strain DSM 6014 / CCUG 31198 / JCM 15750 / NBRC 105917 / EY 4224 / RW1) (Sphingomonas wittichii).